Reading from the N-terminus, the 425-residue chain is MHDIRLLRDQLDVLREGMRRRGKLTELGDVLDRAESLEQARRTAITELEAQQARRNKVTQEVAQRRKAGEDATALIAEGRAIGEQITALEQRRNEADAAVQAMLYELPNIPLADVPEGDETANTVVRTWGTPRTPDASIVPHWDKGEALGMLDLARGAKISGSGFIVYRNRGARLVRALMNMMLDIHTEEHGYEETWVPLVVNRASMTGTGNFPKFEEDAYAITEDELFLIPTAEVPVTNLYRDEILDAEELPKRFCAFSACFRREAGAAGKDTRGLLRVHEFDKVELVRYANPETSLEELELLTSQAETILKRLELPYRVLLLAAGDTGFSSAKTYDLEVFAPGVGKWLEVSSCSLFTDFQARRANIRYRPAAGEKPRFVHTLNGSALAFSRIIASLLEHHQQPDGSVRIPEALQPYFGRAVLA.

233–235 (TAE) contributes to the L-serine binding site. Residues 264-266 (RRE) and Val280 contribute to the ATP site. Glu287 provides a ligand contact to L-serine. An ATP-binding site is contributed by 351 to 354 (EVSS). Ser387 lines the L-serine pocket.

It belongs to the class-II aminoacyl-tRNA synthetase family. Type-1 seryl-tRNA synthetase subfamily. As to quaternary structure, homodimer. The tRNA molecule binds across the dimer.

It is found in the cytoplasm. The enzyme catalyses tRNA(Ser) + L-serine + ATP = L-seryl-tRNA(Ser) + AMP + diphosphate + H(+). It carries out the reaction tRNA(Sec) + L-serine + ATP = L-seryl-tRNA(Sec) + AMP + diphosphate + H(+). It functions in the pathway aminoacyl-tRNA biosynthesis; selenocysteinyl-tRNA(Sec) biosynthesis; L-seryl-tRNA(Sec) from L-serine and tRNA(Sec): step 1/1. In terms of biological role, catalyzes the attachment of serine to tRNA(Ser). Is also able to aminoacylate tRNA(Sec) with serine, to form the misacylated tRNA L-seryl-tRNA(Sec), which will be further converted into selenocysteinyl-tRNA(Sec). The polypeptide is Serine--tRNA ligase (Gemmatimonas aurantiaca (strain DSM 14586 / JCM 11422 / NBRC 100505 / T-27)).